A 79-amino-acid chain; its full sequence is Small ribosomal subunit protein bS18 (79 aa).

Belongs to the bacterial ribosomal protein bS18 family. Part of the 30S ribosomal subunit. Forms a tight heterodimer with protein bS6.

Functionally, binds as a heterodimer with protein bS6 to the central domain of the 16S rRNA, where it helps stabilize the platform of the 30S subunit. This is Small ribosomal subunit protein bS18 (rpsR) from Bacillus subtilis (strain 168).